A 370-amino-acid polypeptide reads, in one-letter code: NADH-quinone oxidoreductase subunit D (370 aa).

Belongs to the complex I 49 kDa subunit family. NDH-1 is composed of 14 different subunits. Subunits NuoB, C, D, E, F, and G constitute the peripheral sector of the complex.

It is found in the cell membrane. It catalyses the reaction a quinone + NADH + 5 H(+)(in) = a quinol + NAD(+) + 4 H(+)(out). In terms of biological role, NDH-1 shuttles electrons from NADH, via FMN and iron-sulfur (Fe-S) centers, to quinones in the respiratory chain. The immediate electron acceptor for the enzyme in this species is believed to be a menaquinone. Couples the redox reaction to proton translocation (for every two electrons transferred, four hydrogen ions are translocated across the cytoplasmic membrane), and thus conserves the redox energy in a proton gradient. The chain is NADH-quinone oxidoreductase subunit D from Desulfitobacterium hafniense (strain Y51).